A 181-amino-acid polypeptide reads, in one-letter code: Large ribosomal subunit protein uL6 (181 aa).

This sequence belongs to the universal ribosomal protein uL6 family. In terms of assembly, part of the 50S ribosomal subunit.

Functionally, this protein binds to the 23S rRNA, and is important in its secondary structure. It is located near the subunit interface in the base of the L7/L12 stalk, and near the tRNA binding site of the peptidyltransferase center. This is Large ribosomal subunit protein uL6 from Vesicomyosocius okutanii subsp. Calyptogena okutanii (strain HA).